The primary structure comprises 490 residues: JNK-interacting protein 1 (490 aa).

2 disordered regions span residues 1 to 71 (MADS…DHEP) and 213 to 254 (EDSS…PVSQ). The segment covering 231–249 (GHSTAHSPNDFKSMSPQIT) has biased composition (polar residues). Residues 271 to 332 (MLEATHRGLH…PSAYAVDLDY (62 aa)) enclose the SH3 domain. The 136-residue stretch at 344 to 479 (KERYLLGYLG…FQRFYQKFIE (136 aa)) folds into the PID domain.

This sequence belongs to the JIP scaffold family. In terms of assembly, forms homo- and heterooligomeric complexes. Binds Hep, a dual specificity protein kinase in the JNK pathway, but not its downstream target bsk. The C-terminal region interacts with the kinesin light chain protein, Klc, and the C-terminal PTY motif of amyloid-beta protein precursor-like protein, Appl. As to expression, expressed in the brain, CNS, PNS and cells posterior to the morphogenetic furrow in the eye imaginal disk of late embryos.

The protein localises to the cytoplasm. The JNK-interacting protein (JIP) group of scaffold proteins selectively mediates JNK signaling by aggregating specific components of the MAPK cascade to form a functional JNK signaling module. May function as a regulator of vesicle transport, through interactions with the JNK-signaling components and motor proteins. This chain is JNK-interacting protein 1 (Aplip1), found in Drosophila melanogaster (Fruit fly).